We begin with the raw amino-acid sequence, 180 residues long: Shikimate kinase (180 aa).

Residue 14–19 (GAGKSS) participates in ATP binding. Serine 18 serves as a coordination point for Mg(2+). Substrate-binding residues include aspartate 36, arginine 60, and glycine 82. ATP is bound at residue arginine 120. Arginine 139 serves as a coordination point for substrate.

This sequence belongs to the shikimate kinase family. As to quaternary structure, monomer. Mg(2+) serves as cofactor.

The protein localises to the cytoplasm. It catalyses the reaction shikimate + ATP = 3-phosphoshikimate + ADP + H(+). Its pathway is metabolic intermediate biosynthesis; chorismate biosynthesis; chorismate from D-erythrose 4-phosphate and phosphoenolpyruvate: step 5/7. Functionally, catalyzes the specific phosphorylation of the 3-hydroxyl group of shikimic acid using ATP as a cosubstrate. The chain is Shikimate kinase from Xylella fastidiosa (strain M23).